Here is a 222-residue protein sequence, read N- to C-terminus: THAP domain-containing protein 6 (222 aa).

Residues 1–89 (MVKCCSAIGC…LKPGVIPSIF (89 aa)) form a THAP-type zinc finger. The HCFC1-binding motif (HBM) motif lies at 139–142 (EHSY). A coiled-coil region spans residues 149-194 (KKLKHKLDHVIGELEDTKESLRNVLDREKRFQKSLRKTIRELKDEC).

This Homo sapiens (Human) protein is THAP domain-containing protein 6 (THAP6).